Consider the following 1435-residue polypeptide: Gag-Pol polyprotein (1435 aa).

The N-myristoyl glycine; by host moiety is linked to residue G2. An interaction with Gp41 region spans residues 7 to 31 (VLSGGKLDAWEKIRLRPGGKKKYRL). An interaction with host CALM1 region spans residues 8 to 43 (LSGGKLDAWEKIRLRPGGKKKYRLKHLVWASRELER). An interaction with host AP3D1 region spans residues 12–19 (KLDAWEKI). The segment at 14 to 33 (DAWEKIRLRPGGKKKYRLKH) is interaction with membrane phosphatidylinositol 4,5-bisphosphate and RNA. Positions 16-22 (WEKIRLR) match the Nuclear export signal motif. Positions 26–32 (KKKYRLK) match the Nuclear localization signal motif. The interaction with membrane phosphatidylinositol 4,5-bisphosphate stretch occupies residues 73-77 (EELKS). Residues 108-127 (QNKSQQKTQQAAADKEKDNK) form a disordered region. Positions 109-118 (NKSQQKTQQA) are enriched in polar residues. Y132 carries the phosphotyrosine; by host modification. The interaction with human PPIA/CYPA and NUP153 stretch occupies residues 189 to 227 (NTVGGHQAAMQMLKDTINEEAAEWDRVHPVHAGPIPPGQ). Residues 277-363 (YSPVSILDIK…GGPSHKARVL (87 aa)) are dimerization/Multimerization of capsid protein p24. CCHC-type zinc fingers lie at residues 391–408 (VKCF…NCRA) and 412–429 (KGCW…DCTE). Residues 445–482 (EARKFSPEQARTNSPTSRELRVRRGDDPLSEAGAAEGQ) are disordered. Basic and acidic residues predominate over residues 462-471 (RELRVRRGDD). The interval 489 to 493 (PQITL) is dimerization of protease. The 70-residue stretch at 508–577 (REALLDTGAD…TPVNIIGRNI (70 aa)) folds into the Peptidase A2 domain. Catalysis depends on D513, which acts as the For protease activity; shared with dimeric partner. 2 dimerization of protease regions span residues 537-543 (GIGGFIK) and 576-588 (NILT…LNFP). In terms of domain architecture, Reverse transcriptase spans 631-821 (EGKISRIGPE…PPFLWMGYEL (191 aa)). Mg(2+) contacts are provided by D697, D772, and D773. The tract at residues 814-822 (FLWMGYELH) is RT 'primer grip'. Positions 985–1001 (WETWWTEYWQATWIPEW) match the Tryptophan repeat motif motif. Residues 1021–1144 (IAGAETYYID…VDKLVSSGVR (124 aa)) form the RNase H type-1 domain. Mg(2+) is bound by residues D1030, E1065, D1085, and D1136. The Integrase-type zinc-finger motif lies at 1150 to 1191 (DGIDKAQEEHERYHNNWRAVASDFNLPPIVAKEIVASCDKCQ). Zn(2+) is bound by residues H1159, H1163, C1187, and C1190. The region spanning 1201–1351 (VDCSPGIWQL…SAGERIIDII (151 aa)) is the Integrase catalytic domain. D1211, D1263, and E1299 together coordinate Mg(2+). A DNA-binding region (integrase-type) is located at residues 1370–1417 (FRVYYRDSRDPIWKGPAKLLWKGEGAVVIQDNSEIKVVPRREAKIIRD).

As to quaternary structure, homotrimer; further assembles as hexamers of trimers. Interacts with gp41 (via C-terminus). Interacts with host CALM1; this interaction induces a conformational change in the Matrix protein, triggering exposure of the myristate group. Interacts with host AP3D1; this interaction allows the polyprotein trafficking to multivesicular bodies during virus assembly. Part of the pre-integration complex (PIC) which is composed of viral genome, matrix protein, Vpr and integrase. Homodimer; the homodimer further multimerizes as homohexamers or homopentamers. Interacts with human PPIA/CYPA; This interaction stabilizes the capsid. Interacts with human NUP153. Interacts with host PDZD8; this interaction stabilizes the capsid. Interacts with monkey TRIM5; this interaction destabilizes the capsid. In terms of assembly, homodimer, whose active site consists of two apposed aspartic acid residues. As to quaternary structure, heterodimer of p66 RT and p51 RT (RT p66/p51). Heterodimerization of RT is essential for DNA polymerase activity. The overall folding of the subdomains is similar in p66 RT and p51 RT but the spatial arrangements of the subdomains are dramatically different. Homodimer; possibly can form homotetramer. Part of the pre-integration complex (PIC) which is composed of viral genome, matrix protein, Vpr and integrase. Interacts with human SMARCB1/INI1 and human PSIP1/LEDGF isoform 1. Interacts with human KPNA3; this interaction might play a role in nuclear import of the pre-integration complex. Interacts with human NUP153; this interaction might play a role in nuclear import of the pre-integration complex. Mg(2+) is required as a cofactor. In terms of processing, specific enzymatic cleavages by the viral protease yield mature proteins. The protease is released by autocatalytic cleavage. The polyprotein is cleaved during and after budding, this process is termed maturation. Proteolytic cleavage of p66 RT removes the RNase H domain to yield the p51 RT subunit. Nucleocapsid protein p7 might be further cleaved after virus entry. Tyrosine phosphorylated presumably in the virion by a host kinase. Phosphorylation is apparently not a major regulator of membrane association. Post-translationally, phosphorylated possibly by host MAPK1; this phosphorylation is necessary for Pin1-mediated virion uncoating. In terms of processing, methylated by host PRMT6, impairing its function by reducing RNA annealing and the initiation of reverse transcription.

The protein localises to the host cell membrane. It localises to the host endosome. The protein resides in the host multivesicular body. It is found in the virion membrane. Its subcellular location is the host nucleus. The protein localises to the host cytoplasm. It localises to the virion. It catalyses the reaction Specific for a P1 residue that is hydrophobic, and P1' variable, but often Pro.. The catalysed reaction is Endohydrolysis of RNA in RNA/DNA hybrids. Three different cleavage modes: 1. sequence-specific internal cleavage of RNA. Human immunodeficiency virus type 1 and Moloney murine leukemia virus enzymes prefer to cleave the RNA strand one nucleotide away from the RNA-DNA junction. 2. RNA 5'-end directed cleavage 13-19 nucleotides from the RNA end. 3. DNA 3'-end directed cleavage 15-20 nucleotides away from the primer terminus.. The enzyme catalyses 3'-end directed exonucleolytic cleavage of viral RNA-DNA hybrid.. It carries out the reaction DNA(n) + a 2'-deoxyribonucleoside 5'-triphosphate = DNA(n+1) + diphosphate. With respect to regulation, protease: The viral protease is inhibited by many synthetic protease inhibitors (PIs), such as amprenavir, atazanavir, indinavir, loprinavir, nelfinavir, ritonavir and saquinavir. Use of protease inhibitors in tritherapy regimens permit more ambitious therapeutic strategies. Reverse transcriptase/ribonuclease H: RT can be inhibited either by nucleoside RT inhibitors (NRTIs) or by non nucleoside RT inhibitors (NNRTIs). NRTIs act as chain terminators, whereas NNRTIs inhibit DNA polymerization by binding a small hydrophobic pocket near the RT active site and inducing an allosteric change in this region. Classical NRTIs are abacavir, adefovir (PMEA), didanosine (ddI), lamivudine (3TC), stavudine (d4T), tenofovir (PMPA), zalcitabine (ddC), and zidovudine (AZT). Classical NNRTIs are atevirdine (BHAP U-87201E), delavirdine, efavirenz (DMP-266), emivirine (I-EBU), and nevirapine (BI-RG-587). The tritherapies used as a basic effective treatment of AIDS associate two NRTIs and one NNRTI. Functionally, mediates, with Gag polyprotein, the essential events in virion assembly, including binding the plasma membrane, making the protein-protein interactions necessary to create spherical particles, recruiting the viral Env proteins, and packaging the genomic RNA via direct interactions with the RNA packaging sequence (Psi). Gag-Pol polyprotein may regulate its own translation, by the binding genomic RNA in the 5'-UTR. At low concentration, the polyprotein would promote translation, whereas at high concentration, the polyprotein would encapsidate genomic RNA and then shut off translation. Targets the polyprotein to the plasma membrane via a multipartite membrane-binding signal, that includes its myristoylated N-terminus. Matrix protein is part of the pre-integration complex. Implicated in the release from host cell mediated by Vpu. Binds to RNA. In terms of biological role, forms the conical core that encapsulates the genomic RNA-nucleocapsid complex in the virion. Most core are conical, with only 7% tubular. The core is constituted by capsid protein hexamer subunits. The core is disassembled soon after virion entry. Host restriction factors such as TRIM5-alpha or TRIMCyp bind retroviral capsids and cause premature capsid disassembly, leading to blocks in reverse transcription. Capsid restriction by TRIM5 is one of the factors which restricts HIV-1 to the human species. Host PIN1 apparently facilitates the virion uncoating. On the other hand, interactions with PDZD8 or CYPA stabilize the capsid. Its function is as follows. Encapsulates and protects viral dimeric unspliced genomic RNA (gRNA). Binds these RNAs through its zinc fingers. Acts as a nucleic acid chaperone which is involved in rearangement of nucleic acid secondary structure during gRNA retrotranscription. Also facilitates template switch leading to recombination. As part of the polyprotein, participates in gRNA dimerization, packaging, tRNA incorporation and virion assembly. Functionally, aspartyl protease that mediates proteolytic cleavages of Gag and Gag-Pol polyproteins during or shortly after the release of the virion from the plasma membrane. Cleavages take place as an ordered, step-wise cascade to yield mature proteins. This process is called maturation. Displays maximal activity during the budding process just prior to particle release from the cell. Also cleaves Nef and Vif, probably concomitantly with viral structural proteins on maturation of virus particles. Hydrolyzes host EIF4GI and PABP1 in order to shut off the capped cellular mRNA translation. The resulting inhibition of cellular protein synthesis serves to ensure maximal viral gene expression and to evade host immune response. Also mediates cleavage of host YTHDF3. Mediates cleavage of host CARD8, thereby activating the CARD8 inflammasome, leading to the clearance of latent HIV-1 in patient CD4(+) T-cells after viral reactivation; in contrast, HIV-1 can evade CARD8-sensing when its protease remains inactive in infected cells prior to viral budding. Multifunctional enzyme that converts the viral RNA genome into dsDNA in the cytoplasm, shortly after virus entry into the cell. This enzyme displays a DNA polymerase activity that can copy either DNA or RNA templates, and a ribonuclease H (RNase H) activity that cleaves the RNA strand of RNA-DNA heteroduplexes in a partially processive 3' to 5' endonucleasic mode. Conversion of viral genomic RNA into dsDNA requires many steps. A tRNA(3)-Lys binds to the primer-binding site (PBS) situated at the 5'-end of the viral RNA. RT uses the 3' end of the tRNA primer to perform a short round of RNA-dependent minus-strand DNA synthesis. The reading proceeds through the U5 region and ends after the repeated (R) region which is present at both ends of viral RNA. The portion of the RNA-DNA heteroduplex is digested by the RNase H, resulting in a ssDNA product attached to the tRNA primer. This ssDNA/tRNA hybridizes with the identical R region situated at the 3' end of viral RNA. This template exchange, known as minus-strand DNA strong stop transfer, can be either intra- or intermolecular. RT uses the 3' end of this newly synthesized short ssDNA to perform the RNA-dependent minus-strand DNA synthesis of the whole template. RNase H digests the RNA template except for two polypurine tracts (PPTs) situated at the 5'-end and near the center of the genome. It is not clear if both polymerase and RNase H activities are simultaneous. RNase H probably can proceed both in a polymerase-dependent (RNA cut into small fragments by the same RT performing DNA synthesis) and a polymerase-independent mode (cleavage of remaining RNA fragments by free RTs). Secondly, RT performs DNA-directed plus-strand DNA synthesis using the PPTs that have not been removed by RNase H as primers. PPTs and tRNA primers are then removed by RNase H. The 3' and 5' ssDNA PBS regions hybridize to form a circular dsDNA intermediate. Strand displacement synthesis by RT to the PBS and PPT ends produces a blunt ended, linear dsDNA copy of the viral genome that includes long terminal repeats (LTRs) at both ends. In terms of biological role, catalyzes viral DNA integration into the host chromosome, by performing a series of DNA cutting and joining reactions. This enzyme activity takes place after virion entry into a cell and reverse transcription of the RNA genome in dsDNA. The first step in the integration process is 3' processing. This step requires a complex comprising the viral genome, matrix protein, Vpr and integrase. This complex is called the pre-integration complex (PIC). The integrase protein removes 2 nucleotides from each 3' end of the viral DNA, leaving recessed CA OH's at the 3' ends. In the second step, the PIC enters cell nucleus. This process is mediated through integrase and Vpr proteins, and allows the virus to infect a non dividing cell. This ability to enter the nucleus is specific of lentiviruses, other retroviruses cannot and rely on cell division to access cell chromosomes. In the third step, termed strand transfer, the integrase protein joins the previously processed 3' ends to the 5' ends of strands of target cellular DNA at the site of integration. The 5'-ends are produced by integrase-catalyzed staggered cuts, 5 bp apart. A Y-shaped, gapped, recombination intermediate results, with the 5'-ends of the viral DNA strands and the 3' ends of target DNA strands remaining unjoined, flanking a gap of 5 bp. The last step is viral DNA integration into host chromosome. This involves host DNA repair synthesis in which the 5 bp gaps between the unjoined strands are filled in and then ligated. Since this process occurs at both cuts flanking the HIV genome, a 5 bp duplication of host DNA is produced at the ends of HIV-1 integration. Alternatively, Integrase may catalyze the excision of viral DNA just after strand transfer, this is termed disintegration. The chain is Gag-Pol polyprotein (gag-pol) from Homo sapiens (Human).